The primary structure comprises 389 residues: Mannitol-1-phosphate 5-dehydrogenase (389 aa).

5-16 (AVHFGAGNIGRG) contacts NAD(+). K215 is an active-site residue.

This sequence belongs to the mannitol dehydrogenase family. Monomer.

The enzyme catalyses D-mannitol 1-phosphate + NAD(+) = beta-D-fructose 6-phosphate + NADH + H(+). Its function is as follows. Catalyzes the NAD(H)-dependent interconversion of D-fructose 6-phosphate and D-mannitol 1-phosphate in the mannitol metabolic pathway. This chain is Mannitol-1-phosphate 5-dehydrogenase, found in Sclerotinia sclerotiorum (strain ATCC 18683 / 1980 / Ss-1) (White mold).